The sequence spans 237 residues: Phosphoribosylaminoimidazole-succinocarboxamide synthase (237 aa).

This sequence belongs to the SAICAR synthetase family.

It catalyses the reaction 5-amino-1-(5-phospho-D-ribosyl)imidazole-4-carboxylate + L-aspartate + ATP = (2S)-2-[5-amino-1-(5-phospho-beta-D-ribosyl)imidazole-4-carboxamido]succinate + ADP + phosphate + 2 H(+). It participates in purine metabolism; IMP biosynthesis via de novo pathway; 5-amino-1-(5-phospho-D-ribosyl)imidazole-4-carboxamide from 5-amino-1-(5-phospho-D-ribosyl)imidazole-4-carboxylate: step 1/2. This chain is Phosphoribosylaminoimidazole-succinocarboxamide synthase, found in Psychrobacter arcticus (strain DSM 17307 / VKM B-2377 / 273-4).